Reading from the N-terminus, the 640-residue chain is MPIITLPDGSQRTFDHPVSVAEVAQSIGAGLAKATVAGKVDGKLVDACDLIDHDATLQIITPKDEEGVEIIRHSCAHLVGHAVKQLYPTAKMVIGPVIDEGFYYDIAYERPFTPEDVAAIEQRMRELIDRDYDVVKKMTPREQVIEVFKSRGEDYKLRLIDDMPDEKAMGLYYHEEYVDMCRGPHVPNTRFLKAFKLTKLSGAYWRGDAKNEQLQRVYGTAWADKKQLAAYIQRIEEAEKRDHRKLGKRLDLFHTQEEAPGMVFWHPNGWTVYQVLEQYMRAVQRENGYLEIKTPQVVDRVLWEKSGHWANYAENMFTTESESRDYAIKPMNCPCHVQVYNQGLKSYRELPLRLAEFGACHRNEPSGALHGIMRVRGFTQDDAHIFCTEEQMQAESAAFIKLTRQVYADFGFQDIQLKLSTRPERRVGSGELWDRAEEALAAALESAGLPYELQPGEGAFYGPKIEFSLKDCLGRVWQCGTLQLDFNLPVRLGAEYVSENNERQHPVMLHRAILGSFERFIGILIEHYEGAFPAWLAPTQAVIMNITDKQGEFALEVERTLNQGGFRAKCDLRNEKIGFKIREHTLLKVPYLLVIGDREVETHSVAVRTREGVDLGTMPVEQFREMLAQAVARRGRQELE.

In terms of domain architecture, TGS spans 1 to 61; the sequence is MPIITLPDGS…DHDATLQIIT (61 aa). The interval 242–533 is catalytic; that stretch reads DHRKLGKRLD…LIEHYEGAFP (292 aa). Residues cysteine 333, histidine 384, and histidine 510 each coordinate Zn(2+).

This sequence belongs to the class-II aminoacyl-tRNA synthetase family. As to quaternary structure, homodimer. Requires Zn(2+) as cofactor.

The protein resides in the cytoplasm. The enzyme catalyses tRNA(Thr) + L-threonine + ATP = L-threonyl-tRNA(Thr) + AMP + diphosphate + H(+). In terms of biological role, catalyzes the attachment of threonine to tRNA(Thr) in a two-step reaction: L-threonine is first activated by ATP to form Thr-AMP and then transferred to the acceptor end of tRNA(Thr). Also edits incorrectly charged L-seryl-tRNA(Thr). In Azotobacter vinelandii (strain DJ / ATCC BAA-1303), this protein is Threonine--tRNA ligase.